A 354-amino-acid polypeptide reads, in one-letter code: Homer protein homolog 1 (354 aa).

Residues 1 to 110 form the WH1 domain; that stretch reads MGEQPIFSTR…EKFQEFKEAA (110 aa). G2 bears the N-acetylglycine mark. Residues 114-173 form a disordered region; the sequence is KEKSQEKMELTSTPSQESAGGDLQSPLTPESINGTDDERTPDVTQNSEPRAEPTQNALPF. 2 stretches are compositionally biased toward polar residues: residues 138-147 and 155-173; these read SPLTPESING and DVTQ…ALPF. The stretch at 181–352 forms a coiled coil; the sequence is KHWEAELATL…LRDNLAKLLE (172 aa). The required for tetramerization stretch occupies residues 290–354; sequence KLQEVEIRNK…DNLAKLLECS (65 aa). At S306 the chain carries Phosphoserine.

Belongs to the Homer family. In terms of assembly, tetramer; this tetrameric structure is critical for forming the high-order complex with SHANK1, which in turn is necessary for the structural and functional integrity of dendritic spines. Interacts with GRM1, GRM5, ITPR1, DNM3, RYR1, RYR2 and SHANK3. Interacts with IFT57 and OPHN1. Isoform 1 encodes a coiled-coil structure that mediates homo- and heteromultimerization. Interacts with SHANK1; forms high-order polymerized complex with a mesh-like network structure, at least composed of SHANK1, HOMER1 and DLGAP1; the complex formation is SHANK1 multimerization dependent. Interacts with NFATC4. Interacts with DAGLA (via PPXXF motif); this interaction is required for the cell membrane localization of DAGLA. Interacts with SRGAP2.

It localises to the cytoplasm. Its subcellular location is the postsynaptic density. The protein resides in the synapse. The protein localises to the cell projection. It is found in the dendritic spine. Postsynaptic density scaffolding protein. Binds and cross-links cytoplasmic regions of GRM1, GRM5, ITPR1, DNM3, RYR1, RYR2, SHANK1 and SHANK3. By physically linking GRM1 and GRM5 with ER-associated ITPR1 receptors, it aids the coupling of surface receptors to intracellular calcium release. May also couple GRM1 to PI3 kinase through its interaction with AGAP2. Isoform 1 regulates the trafficking and surface expression of GRM5. Isoform 3 acts as a natural dominant negative, in dynamic competition with constitutively expressed isoform 1 to regulate synaptic metabotropic glutamate function. Isoform 3, may be involved in the structural changes that occur at synapses during long-lasting neuronal plasticity and development. Forms a high-order complex with SHANK1, which in turn is necessary for the structural and functional integrity of dendritic spines. Negatively regulates T cell activation by inhibiting the calcineurin-NFAT pathway. Acts by competing with calcineurin/PPP3CA for NFAT protein binding, hence preventing NFAT activation by PPP3CA. This chain is Homer protein homolog 1, found in Homo sapiens (Human).